A 936-amino-acid polypeptide reads, in one-letter code: Isoleucine--tRNA ligase (936 aa).

The 'HIGH' region signature appears at 58-68 (PYANGRAHLGT). Residue E561 participates in L-isoleucyl-5'-AMP binding. The short motif at 602–606 (KMSKS) is the 'KMSKS' region element. K605 provides a ligand contact to ATP. 4 residues coordinate Zn(2+): C899, C902, C919, and C922.

It belongs to the class-I aminoacyl-tRNA synthetase family. IleS type 1 subfamily. Monomer. Zn(2+) is required as a cofactor.

It is found in the cytoplasm. It carries out the reaction tRNA(Ile) + L-isoleucine + ATP = L-isoleucyl-tRNA(Ile) + AMP + diphosphate. Functionally, catalyzes the attachment of isoleucine to tRNA(Ile). As IleRS can inadvertently accommodate and process structurally similar amino acids such as valine, to avoid such errors it has two additional distinct tRNA(Ile)-dependent editing activities. One activity is designated as 'pretransfer' editing and involves the hydrolysis of activated Val-AMP. The other activity is designated 'posttransfer' editing and involves deacylation of mischarged Val-tRNA(Ile). The protein is Isoleucine--tRNA ligase of Coxiella burnetii (strain Dugway 5J108-111).